A 905-amino-acid polypeptide reads, in one-letter code: Respiratory burst oxidase homolog protein B (905 aa).

2 disordered regions span residues 1–46 (MADL…KTAR) and 69–134 (EVRG…VRKR). Residues 1–355 (MADLEAGMVA…MYFLEENWKR (355 aa)) lie on the Cytoplasmic side of the membrane. The span at 29-44 (IPNSGNLGSSNRSTKT) shows a compositional bias: polar residues. Positions 75–84 (EGGSGHGTGF) are enriched in gly residues. The span at 91–108 (SPSSKSGKLTSKLRQVTN) shows a compositional bias: polar residues. EF-hand-like regions lie at residues 172 to 180 (QVDGVLLRS) and 206 to 217 (RGIVKQVLTKDE). EF-hand domains follow at residues 229 to 264 (GFDN…SASA) and 273 to 308 (RADE…SPSE). Ca(2+) is bound by residues Asp242, Asn244, Asp246, Arg248, and Glu253. A helical transmembrane segment spans residues 356-376 (SWVMTLWISICIALFIWKFIQ). At 377–440 (YRNRAVFGIM…FNDNINFHKV (64 aa)) the chain is on the extracellular side. A Ferric oxidoreductase domain is found at 395-551 (GAAETLKFNM…HLFVIVYTLL (157 aa)). A helical transmembrane segment spans residues 441–461 (IAAGVAVGVALHAGAHLTCDF). Topologically, residues 462–496 (PRLLHASDAQYELMKPFFGEKRPPNYWWFVKGTEG) are cytoplasmic. Residues 497–517 (WTGVVMVVLMAIAFTLAQPWF) traverse the membrane as a helical segment. Over 518 to 539 (RRNKLKDSNPLKKMTGFNAFWF) the chain is Extracellular. A helical transmembrane segment spans residues 540–560 (THHLFVIVYTLLFVHGTCLYL). Over 561–568 (SRKWYKKT) the chain is Cytoplasmic. Residues 569-586 (TWMYLAVPVVLYVSERIL) form a helical membrane-spanning segment. The region spanning 587–715 (RLFRSHDAVG…DGPYGAPAQD (129 aa)) is the FAD-binding FR-type domain. The Extracellular segment spans residues 587–717 (RLFRSHDAVG…PYGAPAQDYR (131 aa)). The chain crosses the membrane as a helical span at residues 718 to 738 (EYDVLLLIGLGIGATPLISIV). The Cytoplasmic segment spans residues 739-905 (KDVLNHIQGE…TRFDFHKENF (167 aa)).

Belongs to the RBOH (TC 5.B.1.3) family. In terms of assembly, monomer and homodimer, stabilized by swapping the EF-hand motifs. Interacts with GTP-bound RAC1.

It localises to the membrane. In terms of biological role, calcium-dependent NADPH oxidase that generates superoxide. This chain is Respiratory burst oxidase homolog protein B (RBOHB), found in Oryza sativa subsp. japonica (Rice).